The sequence spans 395 residues: S-adenosylmethionine synthase (395 aa).

Position 16 (histidine 16) interacts with ATP. A Mg(2+)-binding site is contributed by aspartate 18. Position 44 (glutamate 44) interacts with K(+). Residues glutamate 57 and glutamine 100 each contribute to the L-methionine site. The interval 100-110 (QSPDIAGGVNL) is flexible loop. Residues 175–177 (DGK), 242–243 (RF), aspartate 251, 257–258 (RK), alanine 274, and lysine 278 each bind ATP. Aspartate 251 is an L-methionine binding site. Lysine 282 serves as a coordination point for L-methionine.

The protein belongs to the AdoMet synthase family. As to quaternary structure, homotetramer; dimer of dimers. The cofactor is Mg(2+). It depends on K(+) as a cofactor.

Its subcellular location is the cytoplasm. It catalyses the reaction L-methionine + ATP + H2O = S-adenosyl-L-methionine + phosphate + diphosphate. It functions in the pathway amino-acid biosynthesis; S-adenosyl-L-methionine biosynthesis; S-adenosyl-L-methionine from L-methionine: step 1/1. Its function is as follows. Catalyzes the formation of S-adenosylmethionine (AdoMet) from methionine and ATP. The overall synthetic reaction is composed of two sequential steps, AdoMet formation and the subsequent tripolyphosphate hydrolysis which occurs prior to release of AdoMet from the enzyme. This Thermus thermophilus (strain ATCC BAA-163 / DSM 7039 / HB27) protein is S-adenosylmethionine synthase.